A 65-amino-acid chain; its full sequence is Weak neurotoxin 8 (65 aa).

Intrachain disulfides connect cysteine 3–cysteine 24, cysteine 6–cysteine 11, cysteine 17–cysteine 42, cysteine 46–cysteine 57, and cysteine 58–cysteine 63.

It belongs to the three-finger toxin family. Ancestral subfamily. Orphan group II sub-subfamily. Expressed by the venom gland.

It is found in the secreted. In terms of biological role, binds with low affinity to muscular (alpha-1-beta-1-delta-epsilon/CHRNA1-CHRNB1-CHRND-CHRNE) and very low affinity to neuronal (alpha-7/CHRNA7) nicotinic acetylcholine receptor (nAChR). The polypeptide is Weak neurotoxin 8 (Naja naja (Indian cobra)).